We begin with the raw amino-acid sequence, 267 residues long: Pre-protein VI (267 aa).

A propeptide spanning residues 1-33 (MEDINFASLAPRHGSRPFMGTWNEIGTSQLNGG) is cleaved from the precursor. Positions 34–54 (AFSWSSLWSGIKNFGSSIKSF) are amphipathic alpha-helix essential for membrane lytic activity. The segment at 36-53 (SWSSLWSGIKNFGSSIKS) is involved in endosomal membrane lysis. The interval 48–74 (GSSIKSFGNKAWNSNTGQMLRDKLKDQ) is interaction with hexon protein. The short motif at 67-76 (LRDKLKDQNF) is the Nuclear export signal element. Disordered regions lie at residues 107–184 (LENS…PMTK) and 199–230 (KPVTLELPPPVPTVPPMPAPTLGTAVSRPTAP). 2 stretches are compositionally biased toward basic and acidic residues: residues 123 to 135 (PKVEEVEVEEKLP) and 146 to 155 (KGEKRPRPDL). Residues 149-153 (KRPRP) carry the Nuclear localization signal motif. Positions 166-169 (PPSY) match the PPXY motif motif. Residues 205–217 (LPPPVPTVPPMPA) show a composition bias toward pro residues. Positions 218-230 (PTLGTAVSRPTAP) are enriched in low complexity. Positions 248–259 (STLNSIVGLGVK) match the Nuclear export signal motif. The tract at residues 250-256 (LNSIVGL) is interaction with hexon protein. The segment at 257–267 (GVKSLKRRRCY) is binds to importin alpha/beta, involved in hexon nuclear import. The short motif at 262 to 265 (KRRR) is the Nuclear localization signal element.

This sequence belongs to the adenoviridae protein VI family. Interacts with hexon protein; this interaction allows nuclear import of hexon trimers and possibly pre-capsid assembly. Interacts (via C-terminal NLS) with importin alpha/beta. As to quaternary structure, interacts (via PPxY motif) with host NEDD4 ubiquitine ligase; this interaction might play a role in virus intracellular transport during entry. Part of a complex composed of the core-capsid bridging protein, the endosome lysis protein VI and the hexon-linking protein VIII; these interactions bridge the virus core to the capsid. Interacts with peripentonal hexons; this interaction stabilizes the capsid by gluing two peripentonal hexons together and joining them with an adjacent group-of-nine hexon. In terms of assembly, heterodimer with the viral protease; disulfide-linked. Interacts with the viral protease. In terms of processing, ubiquitinated by Nedd4 following partial capsid disassembly; which might play a role in intracellular virus movement during entry. Post-translationally, contains the major nuclear import and export signals. Proteolytically removed during virion maturation. The processing of the C-terminus turns the precursor into a mature viral structural protein and abrogates its ability to promote hexon import and act as a potential chaperone protein.

It is found in the host nucleus. The protein resides in the host cytoplasm. Its subcellular location is the virion. In terms of biological role, during virus assembly, promotes hexon trimers nuclear import through nuclear pore complexes via an importin alpha/beta-dependent mechanism. By analogy to herpesviruses capsid assembly, might act as a chaperone to promote the formation of the icosahedral capsid. Its function is as follows. Structural component of the virion that provides increased stability to the particle shell through its interaction with the core-capsid bridging protein and the hexon-linking protein VIII. Fibers shedding during virus entry into host cell allows the endosome lysis protein to be exposed as a membrane-lytic peptide. Exhibits pH-independent membrane fragmentation activity and probably mediates viral rapid escape from host endosome via organellar membrane lysis. It is not clear if it then remains partially associated with the capsid and involved in the intracellular microtubule-dependent transport of capsid to the nucleus, or if it is lost during endosomal penetration. Functionally, cofactor that activates the viral protease. Binds to viral protease in a 1:1 ratio. The protein is Pre-protein VI of Homo sapiens (Human).